We begin with the raw amino-acid sequence, 757 residues long: MRFNQYSYINFPKENVLSELKKCGFDLQNTANHKDSLETFLRRFFFTYQDTNYPLSILAADKKTDLLTFFQSEDELTADIFYTVAFQLLGFSYLVDFEDSDVFRKETGFPIIYGDLIENLYQLLNTRTKKGNTLIDQLVSDGLIPEDNDYHYFNGKSLATFSNQDVIREVVYVESRVDTDQKGLSDLVKVSIIRPRFDGKIPAIMTASPYHQGTNDKASDKALYKMEGELKVKLPHKIELEKPQLNLVQPQGQAELIAEAEEKLTHINSSYTLNDYFLPRGFANLYVSGVGTKDSTGFMTNGDYQQIEAYKNVIDWLNGRCRAFTDHTRQRQVKADWSNGKVATTGLSYLGTMSNGLATTGVDGLEVIIAEAGISSWYNYYRENGLVTSPGGYPGEDFDSLAELTYSRNLLAGDYIRGNEAHQADLEKVKAQLDRKTGDYNQFWHDRNYLLNAHKVKAEVVFTHGSQDWNVKPLHVYQMFHALPTHIHKHLFFHNGAHVYMNNWQSIDFRESINALLTKKLLGQETDFQLPTVIWQDNTAPQTWLSLDNFGGQENCKTFSLGQEEQAIQNQYPDKDFERYGKTYQAFNTELYQGKANQITINLPVTKDLHLNGRAQLNLRIKSSTNKGLLSAQLLEFGQKKYLQPYPAILSARTIDNGRYHMLENLCELPFRPEAQRVVTKGYLNLQNRSDLLLVEDITADEWMDVQFELQPTIYKLKEGDTLRLVLYTTDFEITIRDNTDYHLTVDLAQSMLTLPC.

Catalysis depends on charge relay system residues S348, D468, and H498.

Belongs to the peptidase S15 family. As to quaternary structure, homodimer.

The protein resides in the cytoplasm. It carries out the reaction Hydrolyzes Xaa-Pro-|- bonds to release unblocked, N-terminal dipeptides from substrates including Ala-Pro-|-p-nitroanilide and (sequentially) Tyr-Pro-|-Phe-Pro-|-Gly-Pro-|-Ile.. In terms of biological role, removes N-terminal dipeptides sequentially from polypeptides having unsubstituted N-termini provided that the penultimate residue is proline. In Streptococcus pneumoniae (strain Hungary19A-6), this protein is Xaa-Pro dipeptidyl-peptidase.